A 374-amino-acid polypeptide reads, in one-letter code: Protein A6 homolog (374 aa).

This sequence belongs to the chordopoxvirinae A6 family.

The protein resides in the virion. Its function is as follows. Plays an essential role in immature virion (IV) to mature virion (MV) transition. In Vertebrata (FPV), this protein is Protein A6 homolog.